Reading from the N-terminus, the 379-residue chain is PqqA peptide cyclase (379 aa).

The 213-residue stretch at 8 to 220 folds into the Radical SAM core domain; the sequence is LPAPIGLLAE…IRVVEEARER (213 aa). [4Fe-4S] cluster is bound by residues cysteine 22, cysteine 26, and cysteine 29.

The protein belongs to the radical SAM superfamily. PqqE family. As to quaternary structure, interacts with PqqD. The interaction is necessary for activity of PqqE. [4Fe-4S] cluster serves as cofactor.

It catalyses the reaction [PQQ precursor protein] + S-adenosyl-L-methionine = E-Y cross-linked-[PQQ precursor protein] + 5'-deoxyadenosine + L-methionine + H(+). Its pathway is cofactor biosynthesis; pyrroloquinoline quinone biosynthesis. Its function is as follows. Catalyzes the cross-linking of a glutamate residue and a tyrosine residue in the PqqA protein as part of the biosynthesis of pyrroloquinoline quinone (PQQ). The protein is PqqA peptide cyclase of Methylobacterium nodulans (strain LMG 21967 / CNCM I-2342 / ORS 2060).